Reading from the N-terminus, the 294-residue chain is 33 kDa chaperonin (294 aa).

2 cysteine pairs are disulfide-bonded: Cys-238/Cys-240 and Cys-271/Cys-274.

Belongs to the HSP33 family. In terms of processing, under oxidizing conditions two disulfide bonds are formed involving the reactive cysteines. Under reducing conditions zinc is bound to the reactive cysteines and the protein is inactive.

The protein resides in the cytoplasm. Functionally, redox regulated molecular chaperone. Protects both thermally unfolding and oxidatively damaged proteins from irreversible aggregation. Plays an important role in the bacterial defense system toward oxidative stress. The protein is 33 kDa chaperonin of Staphylococcus haemolyticus (strain JCSC1435).